Consider the following 468-residue polypeptide: Argininosuccinate lyase (468 aa).

The protein belongs to the lyase 1 family. Argininosuccinate lyase subfamily.

It localises to the cytoplasm. It catalyses the reaction 2-(N(omega)-L-arginino)succinate = fumarate + L-arginine. Its pathway is amino-acid biosynthesis; L-arginine biosynthesis; L-arginine from L-ornithine and carbamoyl phosphate: step 3/3. The sequence is that of Argininosuccinate lyase from Alkalilimnicola ehrlichii (strain ATCC BAA-1101 / DSM 17681 / MLHE-1).